A 231-amino-acid polypeptide reads, in one-letter code: Orotate phosphoribosyltransferase (231 aa).

5-phospho-alpha-D-ribose 1-diphosphate is bound by residues Lys-27, 79–80 (YK), Arg-106, Lys-107, Lys-110, His-112, and 133–141 (DDVMTAGTA). Thr-137 and Arg-166 together coordinate orotate.

It belongs to the purine/pyrimidine phosphoribosyltransferase family. PyrE subfamily. In terms of assembly, homodimer. Requires Mg(2+) as cofactor.

It catalyses the reaction orotidine 5'-phosphate + diphosphate = orotate + 5-phospho-alpha-D-ribose 1-diphosphate. It functions in the pathway pyrimidine metabolism; UMP biosynthesis via de novo pathway; UMP from orotate: step 1/2. In terms of biological role, catalyzes the transfer of a ribosyl phosphate group from 5-phosphoribose 1-diphosphate to orotate, leading to the formation of orotidine monophosphate (OMP). This chain is Orotate phosphoribosyltransferase, found in Bifidobacterium adolescentis (strain ATCC 15703 / DSM 20083 / NCTC 11814 / E194a).